Here is a 374-residue protein sequence, read N- to C-terminus: Dual-specificity RNA methyltransferase RlmN (374 aa).

E91 functions as the Proton acceptor in the catalytic mechanism. The 244-residue stretch at 97–340 (EDDRGTLCIS…TTVRKTRGDD (244 aa)) folds into the Radical SAM core domain. An intrachain disulfide couples C104 to C345. 3 residues coordinate [4Fe-4S] cluster: C111, C115, and C118. Residues 165–166 (GE), S197, 219–221 (SLH), and N302 each bind S-adenosyl-L-methionine. C345 functions as the S-methylcysteine intermediate in the catalytic mechanism.

This sequence belongs to the radical SAM superfamily. RlmN family. [4Fe-4S] cluster is required as a cofactor.

It is found in the cytoplasm. The enzyme catalyses adenosine(2503) in 23S rRNA + 2 reduced [2Fe-2S]-[ferredoxin] + 2 S-adenosyl-L-methionine = 2-methyladenosine(2503) in 23S rRNA + 5'-deoxyadenosine + L-methionine + 2 oxidized [2Fe-2S]-[ferredoxin] + S-adenosyl-L-homocysteine. It carries out the reaction adenosine(37) in tRNA + 2 reduced [2Fe-2S]-[ferredoxin] + 2 S-adenosyl-L-methionine = 2-methyladenosine(37) in tRNA + 5'-deoxyadenosine + L-methionine + 2 oxidized [2Fe-2S]-[ferredoxin] + S-adenosyl-L-homocysteine. Specifically methylates position 2 of adenine 2503 in 23S rRNA and position 2 of adenine 37 in tRNAs. m2A2503 modification seems to play a crucial role in the proofreading step occurring at the peptidyl transferase center and thus would serve to optimize ribosomal fidelity. This is Dual-specificity RNA methyltransferase RlmN from Acidovorax sp. (strain JS42).